Reading from the N-terminus, the 448-residue chain is Homogentisate 1,2-dioxygenase (448 aa).

The active-site Proton acceptor is His-303. 2 residues coordinate Fe cation: His-346 and Glu-352. The homogentisate site is built by Tyr-361 and His-382. His-382 is a Fe cation binding site.

Belongs to the homogentisate dioxygenase family. In terms of assembly, hexamer; dimer of trimers. The cofactor is Fe cation.

It catalyses the reaction homogentisate + O2 = 4-maleylacetoacetate + H(+). Its pathway is amino-acid degradation; L-phenylalanine degradation; acetoacetate and fumarate from L-phenylalanine: step 4/6. Involved in the catabolism of homogentisate (2,5-dihydroxyphenylacetate or 2,5-OH-PhAc), a central intermediate in the degradation of phenylalanine and tyrosine. Catalyzes the oxidative ring cleavage of the aromatic ring of homogentisate to yield maleylacetoacetate. The sequence is that of Homogentisate 1,2-dioxygenase from Nitrobacter hamburgensis (strain DSM 10229 / NCIMB 13809 / X14).